The sequence spans 432 residues: Cyclic di-GMP phosphodiesterase CdgJ (432 aa).

The EAL domain occupies 1–232 (MVRCLWAAEC…QRYVSPEHVI (232 aa)). Residues 226-413 (VSPEHVIAMQ…CLELGFDLED (188 aa)) form the HDOD domain.

The enzyme catalyses 3',3'-c-di-GMP + H2O = 5'-phosphoguanylyl(3'-&gt;5')guanosine + H(+). In terms of biological role, phosphodiesterase (PDE) that catalyzes the hydrolysis of cyclic diguanylate (c-di-GMP). Positively regulates motility and negatively regulates biofilm formation. This Vibrio cholerae serotype O1 (strain ATCC 39315 / El Tor Inaba N16961) protein is Cyclic di-GMP phosphodiesterase CdgJ.